The sequence spans 631 residues: Chaperone protein DnaK (631 aa).

Residue Thr175 is modified to Phosphothreonine; by autocatalysis. The disordered stretch occupies residues Gly586 to Lys631. Residues Ala602–Gly611 are compositionally biased toward low complexity. The segment covering Ser612–Lys631 has biased composition (acidic residues).

Belongs to the heat shock protein 70 family.

In terms of biological role, acts as a chaperone. The polypeptide is Chaperone protein DnaK (Bifidobacterium longum subsp. infantis (strain ATCC 15697 / DSM 20088 / JCM 1222 / NCTC 11817 / S12)).